A 336-amino-acid polypeptide reads, in one-letter code: Protein FPV127 (336 aa).

Residues 1–22 (MGGGLVLPTRDPPKEQDTSETA) form a disordered region.

It belongs to the poxviruses A16/G9/J5 family.

This Vertebrata (FPV) protein is Protein FPV127.